Reading from the N-terminus, the 197-residue chain is 3-isopropylmalate dehydratase small subunit (197 aa).

It belongs to the LeuD family. LeuD type 1 subfamily. In terms of assembly, heterodimer of LeuC and LeuD.

It catalyses the reaction (2R,3S)-3-isopropylmalate = (2S)-2-isopropylmalate. Its pathway is amino-acid biosynthesis; L-leucine biosynthesis; L-leucine from 3-methyl-2-oxobutanoate: step 2/4. Its function is as follows. Catalyzes the isomerization between 2-isopropylmalate and 3-isopropylmalate, via the formation of 2-isopropylmaleate. The protein is 3-isopropylmalate dehydratase small subunit of Shouchella clausii (strain KSM-K16) (Alkalihalobacillus clausii).